Reading from the N-terminus, the 361-residue chain is Queuine tRNA-ribosyltransferase (361 aa).

Aspartate 92 serves as the catalytic Proton acceptor. Substrate-binding positions include aspartate 92–phenylalanine 96, aspartate 146, glutamine 189, and glycine 216. An RNA binding region spans residues glycine 247–aspartate 253. Aspartate 266 acts as the Nucleophile in catalysis. The segment at threonine 271 to arginine 275 is RNA binding; important for wobble base 34 recognition. The Zn(2+) site is built by cysteine 304, cysteine 306, cysteine 309, and histidine 335.

Belongs to the queuine tRNA-ribosyltransferase family. As to quaternary structure, homodimer. Within each dimer, one monomer is responsible for RNA recognition and catalysis, while the other monomer binds to the replacement base PreQ1. Requires Zn(2+) as cofactor.

The enzyme catalyses 7-aminomethyl-7-carbaguanine + guanosine(34) in tRNA = 7-aminomethyl-7-carbaguanosine(34) in tRNA + guanine. The protein operates within tRNA modification; tRNA-queuosine biosynthesis. Its function is as follows. Catalyzes the base-exchange of a guanine (G) residue with the queuine precursor 7-aminomethyl-7-deazaguanine (PreQ1) at position 34 (anticodon wobble position) in tRNAs with GU(N) anticodons (tRNA-Asp, -Asn, -His and -Tyr). Catalysis occurs through a double-displacement mechanism. The nucleophile active site attacks the C1' of nucleotide 34 to detach the guanine base from the RNA, forming a covalent enzyme-RNA intermediate. The proton acceptor active site deprotonates the incoming PreQ1, allowing a nucleophilic attack on the C1' of the ribose to form the product. After dissociation, two additional enzymatic reactions on the tRNA convert PreQ1 to queuine (Q), resulting in the hypermodified nucleoside queuosine (7-(((4,5-cis-dihydroxy-2-cyclopenten-1-yl)amino)methyl)-7-deazaguanosine). The sequence is that of Queuine tRNA-ribosyltransferase from Rickettsia felis (strain ATCC VR-1525 / URRWXCal2) (Rickettsia azadi).